The sequence spans 512 residues: Histidine ammonia-lyase (512 aa).

The 5-imidazolinone (Ala-Gly) cross-link spans 141–143; the sequence is ASG. Ser-142 bears the 2,3-didehydroalanine (Ser) mark.

Belongs to the PAL/histidase family. In terms of processing, contains an active site 4-methylidene-imidazol-5-one (MIO), which is formed autocatalytically by cyclization and dehydration of residues Ala-Ser-Gly.

The protein localises to the cytoplasm. The catalysed reaction is L-histidine = trans-urocanate + NH4(+). It participates in amino-acid degradation; L-histidine degradation into L-glutamate; N-formimidoyl-L-glutamate from L-histidine: step 1/3. The polypeptide is Histidine ammonia-lyase (Bacillus velezensis (strain DSM 23117 / BGSC 10A6 / LMG 26770 / FZB42) (Bacillus amyloliquefaciens subsp. plantarum)).